Reading from the N-terminus, the 823-residue chain is Protein Jade-3 (823 aa).

Residues 1–32 (MKRHRPVSSSDSSDESPSTSFTSGSMYRIKSK) are disordered. A compositionally biased stretch (low complexity) spans 8 to 25 (SSSDSSDESPSTSFTSGS). An N6-acetyllysine mark is found at lysine 30 and lysine 32. At serine 85 the chain carries Phosphoserine. A PHD-type 1 zinc finger spans residues 200–250 (DVICDVCRSPDSEEGNDMVFCDKCNVCVHQACYGILKVPEGSWLCRSCVLG). The C2HC pre-PHD-type zinc-finger motif lies at 252–286 (YPQCVLCPKKGGALKTTKTGTKWAHVSCALWIPEV). The PHD-type 2 zinc finger occupies 310-366 (LVCNLCKLKTGACIQCSIKSCITAFHVTCAFEHGLEMKTILDEGDEVKFKSYCLKHS). Disordered stretches follow at residues 372–395 (LGEAEYPHHRAKEQSQAKSEKTSL) and 542–576 (KLKMPKSTPEDHRNSSTETDQQPHSPDSSSSVHSI). Low complexity predominate over residues 561 to 575 (DQQPHSPDSSSSVHS). Phosphoserine is present on serine 566. The residue at position 601 (lysine 601) is an N6-acetyllysine. Serine 608 is subject to Phosphoserine. A disordered region spans residues 609–630 (LSHSRSEAKESSPAWRTPSSEC). Residue lysine 638 is modified to N6-acetyllysine. Composition is skewed to polar residues over residues 650–664 (SSIGNGKSQPNSKFA) and 673–684 (WSGNVTQKDSSS). A disordered region spans residues 650–684 (SSIGNGKSQPNSKFAKSNGLEGSWSGNVTQKDSSS). Position 735 is an N6-acetyllysine (lysine 735). Residues 758 to 823 (RAPYQENDGY…HPLSHSSMQR (66 aa)) are disordered. Phosphoserine occurs at positions 774, 776, and 780. The segment covering 781-809 (DGNKEKVRVRKDSSDRENPPHDSRRDCHG) has biased composition (basic and acidic residues).

It belongs to the JADE family. Component of the HBO1 complex composed at least of ING4 or ING5, KAT7/HBO1, MEAF6, and one of JADE1, JADE2 and JADE3. Ubiquitously expressed, with highest levels in placenta and uterus.

In terms of biological role, scaffold subunit of some HBO1 complexes, which have a histone H4 acetyltransferase activity. This is Protein Jade-3 (JADE3) from Homo sapiens (Human).